We begin with the raw amino-acid sequence, 274 residues long: F-actin-capping protein subunit alpha (274 aa).

This sequence belongs to the F-actin-capping protein alpha subunit family. As to quaternary structure, heterodimer of an alpha and a beta subunit.

It localises to the cytoplasm. Functionally, F-actin-capping proteins bind in a Ca(2+)-independent manner to the fast growing ends of actin filaments (barbed end) thereby blocking the exchange of subunits at these ends. Unlike other capping proteins (such as gelsolin and severin), these proteins do not sever actin filaments. The protein is F-actin-capping protein subunit alpha of Chaetomium thermophilum (strain DSM 1495 / CBS 144.50 / IMI 039719) (Thermochaetoides thermophila).